Here is a 1122-residue protein sequence, read N- to C-terminus: Adhesin P1 (1122 aa).

The first 30 residues, 1 to 30, serve as a signal peptide directing secretion; sequence MKKLIFKLSVGITPLALIGLGSFGLAVSGA. Disordered regions lie at residues 183–209, 244–273, and 544–563; these read AGDTSAEGSATPAGGGSGSSAAGGGAV, DYNSDQNKIPKPKTLLDSSESSESINGGRT, and QNSGSQQSTSTPMPNSNGNE. A compositionally biased stretch (gly residues) spans 195–208; it reads AGGGSGSSAAGGGA. Polar residues predominate over residues 259–273; the sequence is LDSSESSESINGGRT. The helical transmembrane segment at 997–1021 threads the bilayer; the sequence is VLPVAISIPIIIIALALALGLGIGI. The tract at residues 1066 to 1122 is disordered; that stretch reads KTPQMLQANKKDGASSPSKPSAPAAKKPTGPTKPSAPGAKPTAPAKPKAPAPTKKIE. Residues 1079–1122 are compositionally biased toward low complexity; it reads ASSPSKPSAPAAKKPTGPTKPSAPGAKPTAPAKPKAPAPTKKIE.

This sequence belongs to the adhesin P1 family.

It localises to the cell membrane. Functionally, could be involved in cytadherence. This Mycoplasmoides gallisepticum (Mycoplasma gallisepticum) protein is Adhesin P1 (gapA).